A 103-amino-acid chain; its full sequence is Mitochondrial import inner membrane translocase subunit TIM13 (103 aa).

A disordered region spans residues 1-25 (MALSSIFGGGSPSQQSNLPTSSASS). The segment covering 12-25 (PSQQSNLPTSSASS) has biased composition (polar residues). The Twin CX3C motif motif lies at 55-75 (CFEKCLMAPYTSKQDTCVDQC). 2 cysteine pairs are disulfide-bonded: cysteine 55–cysteine 75 and cysteine 59–cysteine 71.

The protein belongs to the small Tim family. As to quaternary structure, heterohexamer; composed of 3 copies of TIM8 and 3 copies of TIM13, named soluble 70 kDa complex. Associates with the TIM22 complex, whose core is composed of TIM22 and TIM54. Interacts with the transmembrane regions of multi-pass transmembrane proteins in transit.

Its subcellular location is the mitochondrion inner membrane. Its function is as follows. Mitochondrial intermembrane chaperone that participates in the import and insertion of some multi-pass transmembrane proteins into the mitochondrial inner membrane. Also required for the transfer of beta-barrel precursors from the TOM complex to the sorting and assembly machinery (SAM complex) of the outer membrane. Acts as a chaperone-like protein that protects the hydrophobic precursors from aggregation and guide them through the mitochondrial intermembrane space. The TIM8-TIM13 complex is non essential and only mediates the import of few proteins, while the predominant TIM9-TIM10 70 kDa complex is crucial and mediates the import of much more proteins. The chain is Mitochondrial import inner membrane translocase subunit TIM13 (TIM13) from Eremothecium gossypii (strain ATCC 10895 / CBS 109.51 / FGSC 9923 / NRRL Y-1056) (Yeast).